The chain runs to 560 residues: Membrane protein insertase YidC (560 aa).

The next 6 membrane-spanning stretches (helical) occupy residues 5–25, 334–354, 357–377, 431–451, 476–496, and 522–542; these read IINL…WQYF, AIDF…MNFF, YVGN…LLMF, LPIL…YVTI, LFGL…WPIL, and FMPL…LIYW.

This sequence belongs to the OXA1/ALB3/YidC family. Type 1 subfamily. As to quaternary structure, interacts with the Sec translocase complex via SecD. Specifically interacts with transmembrane segments of nascent integral membrane proteins during membrane integration.

The protein resides in the cell inner membrane. Its function is as follows. Required for the insertion and/or proper folding and/or complex formation of integral membrane proteins into the membrane. Involved in integration of membrane proteins that insert both dependently and independently of the Sec translocase complex, as well as at least some lipoproteins. Aids folding of multispanning membrane proteins. The polypeptide is Membrane protein insertase YidC (Rickettsia rickettsii (strain Sheila Smith)).